A 396-amino-acid chain; its full sequence is Cathepsin E (396 aa).

Residues 1–19 form the signal peptide; sequence MKTLLLLLLVLLELGEAQG. Positions 20 to 53 are cleaved as a propeptide — activation peptide; that stretch reads SLHRVPLRRHPSLKKKLRARSQLSEFWKSHNLDM. One can recognise a Peptidase A1 domain in the interval 78–396; that stretch reads YFGTISIGSP…NRVGLAPAVP (319 aa). A glycan (N-linked (GlcNAc...) asparagine) is linked at N90. The active site involves D96. 2 disulfides stabilise this stretch: C109–C114 and C272–C276. D281 is an active-site residue. The cysteines at positions 314 and 351 are disulfide-linked.

The protein belongs to the peptidase A1 family. In terms of assembly, homodimer; disulfide-linked. In terms of processing, glycosylated. The nature of the carbohydrate chain varies between cell types. In fibroblasts, the proenzyme contains a high mannose-type oligosaccharide, while the mature enzyme contains a complex-type oligosaccharide. In erythrocyte membranes, both the proenzyme and mature enzyme contain a complex-type oligosaccharide. Two forms are produced by autocatalytic cleavage, form I begins at Ile-54, form II begins at Thr-57. In terms of tissue distribution, expressed abundantly in the stomach, the Clara cells of the lung and activated B-lymphocytes, and at lower levels in lymph nodes, skin and spleen. Not expressed in resting B-lymphocytes.

The protein localises to the endosome. It catalyses the reaction Similar to cathepsin D, but slightly broader specificity.. In terms of biological role, may have a role in immune function. Probably involved in the processing of antigenic peptides during MHC class II-mediated antigen presentation. May play a role in activation-induced lymphocyte depletion in the thymus, and in neuronal degeneration and glial cell activation in the brain. In Homo sapiens (Human), this protein is Cathepsin E (CTSE).